The chain runs to 297 residues: Probable GTP 3',8-cyclase (297 aa).

Positions 4-220 constitute a Radical SAM core domain; sequence EFGREIRSFR…VVTRKFMQNR (217 aa). Arg13 lines the GTP pocket. The [4Fe-4S] cluster site is built by Cys20 and Cys24. An S-adenosyl-L-methionine-binding site is contributed by Tyr26. Cys27 contributes to the [4Fe-4S] cluster binding site. Lys61 serves as a coordination point for GTP. Gly65 lines the S-adenosyl-L-methionine pocket. Thr91 serves as a coordination point for GTP. Ser115 provides a ligand contact to S-adenosyl-L-methionine. Lys151 contributes to the GTP binding site. [4Fe-4S] cluster is bound by residues Cys242 and Cys245. 247-249 is a GTP binding site; it reads RIR. Cys259 is a [4Fe-4S] cluster binding site.

This sequence belongs to the radical SAM superfamily. MoaA family. [4Fe-4S] cluster serves as cofactor.

It catalyses the reaction GTP + AH2 + S-adenosyl-L-methionine = (8S)-3',8-cyclo-7,8-dihydroguanosine 5'-triphosphate + 5'-deoxyadenosine + L-methionine + A + H(+). Its pathway is cofactor biosynthesis; molybdopterin biosynthesis. In terms of biological role, catalyzes the cyclization of GTP to (8S)-3',8-cyclo-7,8-dihydroguanosine 5'-triphosphate. The chain is Probable GTP 3',8-cyclase from Methanococcus vannielii (strain ATCC 35089 / DSM 1224 / JCM 13029 / OCM 148 / SB).